The following is a 114-amino-acid chain: uncharacterized protein (114 aa).

An HIT domain is found at 6-114; that stretch reads IFKNIIQRKI…LGGKKLKSFS (109 aa).

This is an uncharacterized protein from Buchnera aphidicola subsp. Acyrthosiphon pisum (strain APS) (Acyrthosiphon pisum symbiotic bacterium).